Here is a 182-residue protein sequence, read N- to C-terminus: MSEEVGAKRWYAVHTYSGYENKVKKNLEKRVESMNMTEQIFRVVIPEEEETQVKDGKAKTTVKKTFPGYVLVELIMTDESWYVVRNTPGVTGFVGSAGAGSKPNPLLPEEVRFILKQMGLKEKTIDVELEVGEQVRIKSGPFANQVGEVQEIETDKFKLTVLVDMFGRETPVEVEFDQIEKL.

One can recognise a KOW domain in the interval 131-163; sequence VGEQVRIKSGPFANQVGEVQEIETDKFKLTVLV.

This sequence belongs to the NusG family.

Its function is as follows. Participates in transcription elongation, termination and antitermination. This chain is Transcription termination/antitermination protein NusG, found in Staphylococcus aureus (strain NCTC 8325 / PS 47).